The sequence spans 432 residues: Amino-acid acetyltransferase (432 aa).

Residues 286–425 (EKLREATIED…ASLYNYQRQS (140 aa)) form the N-acetyltransferase domain.

The protein belongs to the acetyltransferase family. ArgA subfamily.

The protein localises to the cytoplasm. The enzyme catalyses L-glutamate + acetyl-CoA = N-acetyl-L-glutamate + CoA + H(+). It functions in the pathway amino-acid biosynthesis; L-arginine biosynthesis; N(2)-acetyl-L-ornithine from L-glutamate: step 1/4. This chain is Amino-acid acetyltransferase, found in Azotobacter vinelandii (strain DJ / ATCC BAA-1303).